Reading from the N-terminus, the 711-residue chain is DNA topoisomerase 3 (711 aa).

Residues 2–135 (KSLILAEKPS…LRRLWISSVT (134 aa)) form the Toprim domain. Positions 8 and 104 each coordinate Mg(2+). The region spanning 152 to 580 (YNDLYYAALA…EMKDFTKDVV (429 aa)) is the Topo IA-type catalytic domain. The segment at 186 to 191 (SLGRVQ) is interaction with DNA. Catalysis depends on tyrosine 305, which acts as the O-(5'-phospho-DNA)-tyrosine intermediate. The disordered stretch occupies residues 691-711 (MNKNEGLDNNPFKDALKNLNL).

The protein belongs to the type IA topoisomerase family. The cofactor is Mg(2+).

The catalysed reaction is ATP-independent breakage of single-stranded DNA, followed by passage and rejoining.. In terms of biological role, releases the supercoiling and torsional tension of DNA, which is introduced during the DNA replication and transcription, by transiently cleaving and rejoining one strand of the DNA duplex. Introduces a single-strand break via transesterification at a target site in duplex DNA. The scissile phosphodiester is attacked by the catalytic tyrosine of the enzyme, resulting in the formation of a DNA-(5'-phosphotyrosyl)-enzyme intermediate and the expulsion of a 3'-OH DNA strand. The free DNA strand then undergoes passage around the unbroken strand, thus removing DNA supercoils. Finally, in the religation step, the DNA 3'-OH attacks the covalent intermediate to expel the active-site tyrosine and restore the DNA phosphodiester backbone. This is DNA topoisomerase 3 from Staphylococcus aureus (strain MRSA252).